Here is a 464-residue protein sequence, read N- to C-terminus: tRNA(Ile)-lysidine synthase (464 aa).

Position 26-31 (Ser26–Ser31) interacts with ATP.

Belongs to the tRNA(Ile)-lysidine synthase family.

It is found in the cytoplasm. It carries out the reaction cytidine(34) in tRNA(Ile2) + L-lysine + ATP = lysidine(34) in tRNA(Ile2) + AMP + diphosphate + H(+). Functionally, ligates lysine onto the cytidine present at position 34 of the AUA codon-specific tRNA(Ile) that contains the anticodon CAU, in an ATP-dependent manner. Cytidine is converted to lysidine, thus changing the amino acid specificity of the tRNA from methionine to isoleucine. In Geobacillus kaustophilus (strain HTA426), this protein is tRNA(Ile)-lysidine synthase.